The sequence spans 350 residues: Dihydroorotate dehydrogenase (quinone) (350 aa).

FMN is bound by residues 67-71 (AGFDK) and glycine 91. Lysine 71 contacts substrate. 116–120 (NRMGF) contributes to the substrate binding site. Residues asparagine 144 and asparagine 177 each contribute to the FMN site. Position 177 (asparagine 177) interacts with substrate. Serine 180 functions as the Nucleophile in the catalytic mechanism. Asparagine 182 is a substrate binding site. 2 residues coordinate FMN: lysine 213 and threonine 241. Substrate is bound at residue 242 to 243 (NT). The disordered stretch occupies residues 249–268 (ASLHSDAADEEGGLSGAPIT). Residues glycine 264, glycine 291, and 312–313 (YT) each bind FMN.

Belongs to the dihydroorotate dehydrogenase family. Type 2 subfamily. Monomer. It depends on FMN as a cofactor.

The protein resides in the cell membrane. It catalyses the reaction (S)-dihydroorotate + a quinone = orotate + a quinol. It functions in the pathway pyrimidine metabolism; UMP biosynthesis via de novo pathway; orotate from (S)-dihydroorotate (quinone route): step 1/1. Catalyzes the conversion of dihydroorotate to orotate with quinone as electron acceptor. In Natronomonas pharaonis (strain ATCC 35678 / DSM 2160 / CIP 103997 / JCM 8858 / NBRC 14720 / NCIMB 2260 / Gabara) (Halobacterium pharaonis), this protein is Dihydroorotate dehydrogenase (quinone).